The sequence spans 125 residues: NADH-ubiquinone oxidoreductase chain 1 (125 aa).

Helical transmembrane passes span 5 to 25 (IFAF…VAFL), 74 to 94 (YLFF…WNFM), and 105 to 125 (LSLL…LGSG).

This sequence belongs to the complex I subunit 1 family.

Its subcellular location is the mitochondrion inner membrane. The enzyme catalyses a ubiquinone + NADH + 5 H(+)(in) = a ubiquinol + NAD(+) + 4 H(+)(out). In terms of biological role, core subunit of the mitochondrial membrane respiratory chain NADH dehydrogenase (Complex I) that is believed to belong to the minimal assembly required for catalysis. Complex I functions in the transfer of electrons from NADH to the respiratory chain. The immediate electron acceptor for the enzyme is believed to be ubiquinone. This Arbacia lixula (Black urchin) protein is NADH-ubiquinone oxidoreductase chain 1 (ND1).